Consider the following 430-residue polypeptide: Adenylosuccinate synthetase (430 aa).

Residues 12–18 (GDEGKGK) and 40–42 (GHT) contribute to the GTP site. The active-site Proton acceptor is Asp-13. 2 residues coordinate Mg(2+): Asp-13 and Gly-40. Residues 13–16 (DEGK), 38–41 (NAGH), Thr-130, Arg-144, Gln-225, Thr-240, and Arg-304 contribute to the IMP site. The Proton donor role is filled by His-41. 300–306 (ATTGRPR) provides a ligand contact to substrate. GTP-binding positions include Arg-306, 332-334 (KLD), and 414-416 (SIG).

It belongs to the adenylosuccinate synthetase family. As to quaternary structure, homodimer. It depends on Mg(2+) as a cofactor.

Its subcellular location is the cytoplasm. It carries out the reaction IMP + L-aspartate + GTP = N(6)-(1,2-dicarboxyethyl)-AMP + GDP + phosphate + 2 H(+). The protein operates within purine metabolism; AMP biosynthesis via de novo pathway; AMP from IMP: step 1/2. Plays an important role in the de novo pathway of purine nucleotide biosynthesis. Catalyzes the first committed step in the biosynthesis of AMP from IMP. The protein is Adenylosuccinate synthetase of Geobacter metallireducens (strain ATCC 53774 / DSM 7210 / GS-15).